The chain runs to 381 residues: Creatine kinase M-type (381 aa).

Residues 11-98 form the Phosphagen kinase N-terminal domain; that stretch reads KLNYKPEEEY…FDPIISDRHG (88 aa). The region spanning 125 to 367 is the Phosphagen kinase C-terminal domain; that stretch reads YVLSSRVRTG…KLMVEMEKKL (243 aa). Residue 128–132 participates in ATP binding; the sequence is SSRVR. Ser164 is modified (phosphoserine). Residue Thr166 is modified to Phosphothreonine. Ser178 bears the Phosphoserine mark. At Thr180 the chain carries Phosphothreonine. ATP is bound at residue His191. Ser199 carries the phosphoserine modification. ATP is bound by residues Arg236 and Arg292. 2 positions are modified to phosphothreonine: Thr313 and Thr322. ATP-binding positions include 320–325 and Asp335; that span reads RGTGGV. Ser372 carries the phosphoserine modification.

Belongs to the ATP:guanido phosphotransferase family. Dimer of identical or non-identical chains, which can be either B (brain type) or M (muscle type). With MM being the major form in skeletal muscle and myocardium, MB existing in myocardium, and BB existing in many tissues, especially brain.

It is found in the cytoplasm. The catalysed reaction is creatine + ATP = N-phosphocreatine + ADP + H(+). Reversibly catalyzes the transfer of phosphate between ATP and various phosphogens (e.g. creatine phosphate). Creatine kinase isoenzymes play a central role in energy transduction in tissues with large, fluctuating energy demands, such as skeletal muscle, heart, brain and spermatozoa. The protein is Creatine kinase M-type (CKM) of Homo sapiens (Human).